The following is a 102-amino-acid chain: 10 kDa heat shock protein, mitochondrial (102 aa).

An N-acetylalanine modification is found at alanine 2. Lysine 8 is modified (N6-acetyllysine). Residue lysine 28 is modified to N6-succinyllysine. The residue at position 40 (lysine 40) is an N6-acetyllysine; alternate. An N6-malonyllysine; alternate mark is found at lysine 40, lysine 54, and lysine 56. Lysine 40, lysine 54, and lysine 56 each carry N6-succinyllysine; alternate. Lysine 56 carries the N6-acetyllysine; alternate modification. Serine 57 is subject to Phosphoserine. Residues lysine 66 and lysine 70 each carry the N6-acetyllysine; alternate modification. N6-succinyllysine; alternate occurs at positions 66 and 70. A Phosphothreonine modification is found at threonine 79. N6-acetyllysine; alternate occurs at positions 80 and 86. N6-succinyllysine; alternate occurs at positions 80 and 86. N6-acetyllysine is present on lysine 99.

This sequence belongs to the GroES chaperonin family. Homoheptamer arranged in a ring structure. 2 heptameric Hsp10 rings interact with a Hsp60 tetradecamer in the structure of a back-to-back double heptameric ring to form the symmetrical football complex.

It is found in the mitochondrion matrix. Co-chaperonin implicated in mitochondrial protein import and macromolecular assembly. Together with Hsp60, facilitates the correct folding of imported proteins. May also prevent misfolding and promote the refolding and proper assembly of unfolded polypeptides generated under stress conditions in the mitochondrial matrix. The functional units of these chaperonins consist of heptameric rings of the large subunit Hsp60, which function as a back-to-back double ring. In a cyclic reaction, Hsp60 ring complexes bind one unfolded substrate protein per ring, followed by the binding of ATP and association with 2 heptameric rings of the co-chaperonin Hsp10. This leads to sequestration of the substrate protein in the inner cavity of Hsp60 where, for a certain period of time, it can fold undisturbed by other cell components. Synchronous hydrolysis of ATP in all Hsp60 subunits results in the dissociation of the chaperonin rings and the release of ADP and the folded substrate protein. The protein is 10 kDa heat shock protein, mitochondrial (Hspe1) of Mus musculus (Mouse).